The sequence spans 203 residues: Methyltransferase-like 26 (203 aa).

This sequence belongs to the UPF0585 family.

The polypeptide is Methyltransferase-like 26 (Xenopus tropicalis (Western clawed frog)).